The sequence spans 623 residues: Glutathione import ATP-binding protein GsiA (623 aa).

ABC transporter domains lie at 15 to 269 (VENL…RALL) and 314 to 564 (LRVR…RKLL). Residues 49–56 (GESGSGKS) and 357–364 (GESGSGKS) each bind ATP.

This sequence belongs to the ABC transporter superfamily. Glutathione importer (TC 3.A.1.5.11) family. In terms of assembly, the complex is composed of two ATP-binding proteins (GsiA), two transmembrane proteins (GsiC and GsiD) and a solute-binding protein (GsiB).

The protein localises to the cell inner membrane. It carries out the reaction glutathione(out) + ATP + H2O = glutathione(in) + ADP + phosphate + H(+). Functionally, part of the ABC transporter complex GsiABCD involved in glutathione import. Responsible for energy coupling to the transport system. This Escherichia coli O1:K1 / APEC protein is Glutathione import ATP-binding protein GsiA.